A 123-amino-acid chain; its full sequence is Steroid Delta-isomerase (123 aa).

The active-site Proton donor is the Tyr-12. Residue Asp-36 is the Proton acceptor of the active site. Asp-96 serves as a coordination point for substrate.

In terms of assembly, homodimer.

The catalysed reaction is a 3-oxo-Delta(5)-steroid = a 3-oxo-Delta(4)-steroid. This is Steroid Delta-isomerase (ksdI) from Nocardioides simplex (Arthrobacter simplex).